Consider the following 71-residue polypeptide: Delta-actitoxin-Avd2b 4 (71 aa).

Positions 1-20 (MMNRLLVFLMLGAFMLVVSA) are cleaved as a signal peptide. A propeptide spanning residues 21 to 41 (NDAYGDEPAFKDLNQGDESLG) is cleaved from the precursor. Cystine bridges form between Cys-46–Cys-61, Cys-47–Cys-55, and Cys-49–Cys-66.

The protein belongs to the sea anemone short toxin (type III) family.

It localises to the secreted. The protein localises to the nematocyst. In terms of biological role, voltage-gated sodium channel (Nav) inhibitor. 1 uM completely inhibits insect voltage-gated sodium channel inactivation (DmNav1 from D.melanogaster). The protein is Delta-actitoxin-Avd2b 4 of Anemonia viridis (Snakelocks anemone).